Here is a 427-residue protein sequence, read N- to C-terminus: Adenylosuccinate synthetase (427 aa).

GTP-binding positions include 12 to 18 and 40 to 42; these read GDEGKGK and GHT. The Proton acceptor role is filled by Asp-13. Residues Asp-13 and Gly-40 each coordinate Mg(2+). IMP contacts are provided by residues 13–16, 38–41, Thr-131, Arg-145, Gln-226, Thr-241, and Arg-305; these read DEGK and NAGH. His-41 (proton donor) is an active-site residue. 301-307 is a substrate binding site; the sequence is ATTGRKR. GTP contacts are provided by residues Arg-307, 333–335, and 415–417; these read KLD and SVG.

Belongs to the adenylosuccinate synthetase family. As to quaternary structure, homodimer. It depends on Mg(2+) as a cofactor.

It is found in the cytoplasm. The enzyme catalyses IMP + L-aspartate + GTP = N(6)-(1,2-dicarboxyethyl)-AMP + GDP + phosphate + 2 H(+). It functions in the pathway purine metabolism; AMP biosynthesis via de novo pathway; AMP from IMP: step 1/2. In terms of biological role, plays an important role in the de novo pathway of purine nucleotide biosynthesis. Catalyzes the first committed step in the biosynthesis of AMP from IMP. In Oleidesulfovibrio alaskensis (strain ATCC BAA-1058 / DSM 17464 / G20) (Desulfovibrio alaskensis), this protein is Adenylosuccinate synthetase.